A 457-amino-acid chain; its full sequence is Argininosuccinate lyase (457 aa).

Belongs to the lyase 1 family. Argininosuccinate lyase subfamily.

The protein resides in the cytoplasm. The enzyme catalyses 2-(N(omega)-L-arginino)succinate = fumarate + L-arginine. It functions in the pathway amino-acid biosynthesis; L-arginine biosynthesis; L-arginine from L-ornithine and carbamoyl phosphate: step 3/3. The polypeptide is Argininosuccinate lyase (Pasteurella multocida (strain Pm70)).